The primary structure comprises 307 residues: Putative ankyrin repeat protein L59 (307 aa).

9 ANK repeats span residues 41 to 67, 68 to 97, 98 to 127, 129 to 157, 158 to 187, 188 to 217, 219 to 247, 248 to 277, and 279 to 307; these read LFNKLLKVALKNRNLPMVKFVCDNLEK, IDNKAITLAAKYNCLEILKYLHEKGLDTTN, HNYSALSWAARNNDFKMVEYLQHQGSDIRA, DDEALRWAALSGCLEMVEYLQTQGCDVRN, RNDFAIKYAARNGHFKLVRYLHSQGSDIRT, DDDYALRWAARNGHLEIVKYLHSKGCNIHA, GDSAIKWASMGGYLEIVEYLHGVGCDIRI, DNDYPIRWAASNGHLEVVEYLFSQGCDIGA, and NNYALMWAKKNGHDDVVEYIVLLKLLKLY.

The chain is Putative ankyrin repeat protein L59 from Acanthamoeba polyphaga (Amoeba).